We begin with the raw amino-acid sequence, 167 residues long: Ribosome maturation factor RimM (167 aa).

In terms of domain architecture, PRC barrel spans 94 to 165; sequence EHEYYYSDII…TIKITPMEGL (72 aa).

This sequence belongs to the RimM family. Binds ribosomal protein uS19.

The protein localises to the cytoplasm. Functionally, an accessory protein needed during the final step in the assembly of 30S ribosomal subunit, possibly for assembly of the head region. Essential for efficient processing of 16S rRNA. May be needed both before and after RbfA during the maturation of 16S rRNA. It has affinity for free ribosomal 30S subunits but not for 70S ribosomes. This is Ribosome maturation factor RimM from Staphylococcus epidermidis (strain ATCC 12228 / FDA PCI 1200).